The chain runs to 266 residues: Tryptophan synthase alpha chain (266 aa).

Active-site proton acceptor residues include Glu52 and Asp63.

This sequence belongs to the TrpA family. As to quaternary structure, tetramer of two alpha and two beta chains.

It catalyses the reaction (1S,2R)-1-C-(indol-3-yl)glycerol 3-phosphate + L-serine = D-glyceraldehyde 3-phosphate + L-tryptophan + H2O. Its pathway is amino-acid biosynthesis; L-tryptophan biosynthesis; L-tryptophan from chorismate: step 5/5. Functionally, the alpha subunit is responsible for the aldol cleavage of indoleglycerol phosphate to indole and glyceraldehyde 3-phosphate. This is Tryptophan synthase alpha chain from Nocardia farcinica (strain IFM 10152).